The primary structure comprises 216 residues: Probable nicotinate-nucleotide adenylyltransferase (216 aa).

It belongs to the NadD family.

The catalysed reaction is nicotinate beta-D-ribonucleotide + ATP + H(+) = deamido-NAD(+) + diphosphate. It participates in cofactor biosynthesis; NAD(+) biosynthesis; deamido-NAD(+) from nicotinate D-ribonucleotide: step 1/1. Catalyzes the reversible adenylation of nicotinate mononucleotide (NaMN) to nicotinic acid adenine dinucleotide (NaAD). The protein is Probable nicotinate-nucleotide adenylyltransferase of Geotalea daltonii (strain DSM 22248 / JCM 15807 / FRC-32) (Geobacter daltonii).